A 379-amino-acid polypeptide reads, in one-letter code: MDPMESSSEQDIVEESQKLVDSLDKLRVSAASSSSNFKKKPIIIIVVGMAGSGKTSFLHRLVCHTFDSKSHGYVVNLDPAVMSLPFGANIDIRDTVKYKEVMKQYNLGPNGGILTSLNLFATKFDEVVSVIEKRADQLDYVLVDTPGQIEIFTWSASGAIITEAFASTFPTVVTYVVDTPRSSSPITFMSNMLYACSILYKTRLPLVLAFNKTDVADHKFALEWMEDFEVFQAAIQSDNSYTATLANSLSLSLYEFYRNIRSVGVSAISGAGMDGFFKAIEASAEEYMETYKADLDMRKADKERLEEERKKHEMEKLRKDMESSQGGTVVLNTGLKDRDATEKMMLEEDDEDFQVEDEEDSDDAIDEDDEDDETKHYYL.

Methionine 1 is subject to N-acetylmethionine. GTP is bound at residue 51–56 (GSGKTS). The Gly-Pro-Asn (GPN)-loop; involved in dimer interface signature appears at 108–110 (GPN). GTP-binding positions include 211-214 (NKTD) and alanine 267. A coiled-coil region spans residues 288-322 (METYKADLDMRKADKERLEEERKKHEMEKLRKDME). Basic and acidic residues-rich tracts occupy residues 303 to 322 (ERLE…KDME) and 335 to 346 (LKDRDATEKMML). The interval 303 to 379 (ERLEEERKKH…EDDETKHYYL (77 aa)) is disordered. Acidic residues predominate over residues 347 to 372 (EEDDEDFQVEDEEDSDDAIDEDDEDD).

It belongs to the GPN-loop GTPase family. Heterodimer with QQT1. Expressed in individual cells of roots, leaves and flowers.

It localises to the cytoplasm. The protein localises to the nucleus. Its subcellular location is the cytoskeleton. The protein resides in the spindle. It is found in the phragmoplast. Functionally, small GTPase that is essential for the correct formation of the tangential divisions in early embryos. Associates with microtubule during mitosis and may function in the positioning of the division plane. May participate in the patterning of the early embryo at the octant-dermatogen transition. This Arabidopsis thaliana (Mouse-ear cress) protein is GPN-loop GTPase QQT2.